Here is a 587-residue protein sequence, read N- to C-terminus: Beta-(1--&gt;2)glucan export ATP-binding/permease protein NdvA (587 aa).

The ABC transmembrane type-1 domain maps to 21-301 (VSLVVIANIV…MRQFATQIFE (281 aa)). 6 helical membrane passes run 23–43 (LVVIANIVLATITIAEPILFG), 57–77 (PILFMWAAFAVFNTVAFVLVS), 126–146 (LFGLWLEFMRNHLSTVIALAL), 158–178 (LSAVLIVLGIAYWLIGRVVMS), 248–268 (MASTIAMMVVLIIGTMLVQSG), and 272–292 (IGDVIAFIGFANLLIARLDLM). Residues 335–569 (IEFRDVSFGF…NGRFAALLRA (235 aa)) form the ABC transporter domain. An ATP-binding site is contributed by 368–375 (GPTGAGKT).

The protein belongs to the ABC transporter superfamily. Beta-(1--&gt;2)glucan exporter (TC 3.A.1.108.1) family. In terms of assembly, homodimer.

It localises to the cell inner membrane. The enzyme catalyses [(1-&gt;2)-beta-D-glucosyl](n)(in) + ATP + H2O = [(1-&gt;2)-beta-D-glucosyl](n)(out) + ADP + phosphate + H(+). Functionally, involved in beta-(1--&gt;2)glucan export. Transmembrane domains (TMD) form a pore in the inner membrane and the ATP-binding domain (NBD) is responsible for energy generation. This is Beta-(1--&gt;2)glucan export ATP-binding/permease protein NdvA from Rhizobium etli (strain ATCC 51251 / DSM 11541 / JCM 21823 / NBRC 15573 / CFN 42).